Here is a 315-residue protein sequence, read N- to C-terminus: Neuroguidin (315 aa).

Position 2 is an N-acetylalanine (Ala-2). A coiled-coil region spans residues 5-42 (EVLESDLPNAVALLKNLQEQVMAVTAQVQTLTKKVQAK). Residues 41 to 174 (AKAYPTEKGL…KGTAKKYVPP (134 aa)) are necessary for interaction with EIF4E. Phosphoserine occurs at positions 121, 142, and 143. The disordered stretch occupies residues 123–174 (SENDPLRFKPHPSNMMSKLSSEDEEEDEAEEGQSGASGKKSGKGTAKKYVPP). Positions 144-153 (EDEEEDEAEE) are enriched in acidic residues. Residues 181 to 205 (YDETEAEREKKRLERAKRRALSSSV) are a coiled coil. Ser-204 and Ser-214 each carry phosphoserine. Positions 252 to 315 (SKREKGRRKR…RKKKGFRRRR (64 aa)) are disordered. The segment covering 264–276 (VMSSQLHSLTHFS) has biased composition (polar residues). Residues 295–315 (TKKRKKIPKKGRKKKGFRRRR) show a composition bias toward basic residues.

The protein belongs to the SAS10 family. Part of the small subunit (SSU) processome, composed of more than 70 proteins and the RNA chaperone small nucleolar RNA (snoRNA) U3. Interacts with CPEB1 and EIF4E.

The protein localises to the nucleus. It is found in the nucleolus. Its subcellular location is the chromosome. It localises to the centromere. The protein resides in the cytoplasm. The protein localises to the cell projection. It is found in the axon. Its subcellular location is the dendrite. It localises to the filopodium. Its function is as follows. Part of the small subunit (SSU) processome, first precursor of the small eukaryotic ribosomal subunit. During the assembly of the SSU processome in the nucleolus, many ribosome biogenesis factors, an RNA chaperone and ribosomal proteins associate with the nascent pre-rRNA and work in concert to generate RNA folding, modifications, rearrangements and cleavage as well as targeted degradation of pre-ribosomal RNA by the RNA exosome. Its dissociation from the complex determines the transition from state pre-A1 to state pre-A1*. Inhibits mRNA translation in a cytoplasmic polyadenylation element (CPE)-dependent manner. The protein is Neuroguidin (NGDN) of Bos taurus (Bovine).